Consider the following 160-residue polypeptide: Transcription elongation factor GreA (160 aa).

Residues 50–70 (AAREQQSFNEGRIQELEAKLS) are a coiled coil.

The protein belongs to the GreA/GreB family.

In terms of biological role, necessary for efficient RNA polymerase transcription elongation past template-encoded arresting sites. The arresting sites in DNA have the property of trapping a certain fraction of elongating RNA polymerases that pass through, resulting in locked ternary complexes. Cleavage of the nascent transcript by cleavage factors such as GreA or GreB allows the resumption of elongation from the new 3'terminus. GreA releases sequences of 2 to 3 nucleotides. This chain is Transcription elongation factor GreA, found in Legionella pneumophila (strain Paris).